A 197-amino-acid polypeptide reads, in one-letter code: HTH-type transcriptional regulator BetI (197 aa).

In terms of domain architecture, HTH tetR-type spans 8–68; sequence PIRRQQLIQA…ATMRHLMNAL (61 aa). The segment at residues 31-50 is a DNA-binding region (H-T-H motif); the sequence is SIALIARLAGVSNGIISHYF.

The protein operates within amine and polyamine biosynthesis; betaine biosynthesis via choline pathway [regulation]. In terms of biological role, repressor involved in the biosynthesis of the osmoprotectant glycine betaine. It represses transcription of the choline transporter BetT and the genes of BetAB involved in the synthesis of glycine betaine. This is HTH-type transcriptional regulator BetI from Pseudomonas syringae pv. tomato (strain ATCC BAA-871 / DC3000).